The primary structure comprises 381 residues: 8-amino-7-oxononanoate synthase (381 aa).

Arginine 27 contributes to the substrate binding site. A pyridoxal 5'-phosphate-binding site is contributed by 105 to 106 (GY). Histidine 130 contacts substrate. Pyridoxal 5'-phosphate contacts are provided by residues serine 176, 201–204 (DEAH), and 232–235 (TLSK). The residue at position 235 (lysine 235) is an N6-(pyridoxal phosphate)lysine. Threonine 345 contributes to the substrate binding site.

The protein belongs to the class-II pyridoxal-phosphate-dependent aminotransferase family. BioF subfamily. As to quaternary structure, homodimer. It depends on pyridoxal 5'-phosphate as a cofactor.

It catalyses the reaction 6-carboxyhexanoyl-[ACP] + L-alanine + H(+) = (8S)-8-amino-7-oxononanoate + holo-[ACP] + CO2. It participates in cofactor biosynthesis; biotin biosynthesis. In terms of biological role, catalyzes the decarboxylative condensation of pimeloyl-[acyl-carrier protein] and L-alanine to produce 8-amino-7-oxononanoate (AON), [acyl-carrier protein], and carbon dioxide. This chain is 8-amino-7-oxononanoate synthase, found in Mycolicibacterium paratuberculosis (strain ATCC BAA-968 / K-10) (Mycobacterium paratuberculosis).